Here is a 465-residue protein sequence, read N- to C-terminus: MTKTMYEKIWDAHLVYEPESGSPILFVDRHLMHEVTSPQAFEGLKLQNRGVRNTHSILATMDHCVPTKGRAEISDPVAAKQIQTMAVNCKEHGINLYDMSNANNGIIHIVVPEHGFVHPGMVVCCGDSHTSTHGAFGTLAFGIGTSEVEHVMATQTLQQQKSKTLLINVEGTLSKHATAKDIALAIIGKTGTAGGTGYVIEFAGDAVVNLTMEGRMTLCNMAIEAGARAGLIAPDQKTFDFLEGKEFAPKGKDWDAALAYWKTLPSDKGADFDKVINFKAEDIAPQVTWGTSPEQVISVNGIVPAPTDFDDPIKAQACKNALEYMKIKAGQKMTDVNVDIVFLGSCTNGRIEDFRAAAEMLKGKTIAPGVQAIAVPGSYPVKEQAEAEGLDKIFLDAGWEWREPGCSMCLAMNGDELTEGQRSASTSNRNFEGRQGKNGLTHLVSPAMAAAASIAGHFVDIRDWA.

[4Fe-4S] cluster-binding residues include Cys-346, Cys-406, and Cys-409.

Belongs to the aconitase/IPM isomerase family. LeuC type 1 subfamily. As to quaternary structure, heterodimer of LeuC and LeuD. The cofactor is [4Fe-4S] cluster.

It catalyses the reaction (2R,3S)-3-isopropylmalate = (2S)-2-isopropylmalate. It participates in amino-acid biosynthesis; L-leucine biosynthesis; L-leucine from 3-methyl-2-oxobutanoate: step 2/4. Its function is as follows. Catalyzes the isomerization between 2-isopropylmalate and 3-isopropylmalate, via the formation of 2-isopropylmaleate. The chain is 3-isopropylmalate dehydratase large subunit from Psychromonas ingrahamii (strain DSM 17664 / CCUG 51855 / 37).